A 268-amino-acid chain; its full sequence is Ribosomal RNA small subunit methyltransferase A (268 aa).

The S-adenosyl-L-methionine site is built by Asn11, Leu13, Gly37, Glu58, Asp86, and Asn104.

This sequence belongs to the class I-like SAM-binding methyltransferase superfamily. rRNA adenine N(6)-methyltransferase family. RsmA subfamily.

It localises to the cytoplasm. It catalyses the reaction adenosine(1518)/adenosine(1519) in 16S rRNA + 4 S-adenosyl-L-methionine = N(6)-dimethyladenosine(1518)/N(6)-dimethyladenosine(1519) in 16S rRNA + 4 S-adenosyl-L-homocysteine + 4 H(+). In terms of biological role, specifically dimethylates two adjacent adenosines (A1518 and A1519) in the loop of a conserved hairpin near the 3'-end of 16S rRNA in the 30S particle. May play a critical role in biogenesis of 30S subunits. This Campylobacter fetus subsp. fetus (strain 82-40) protein is Ribosomal RNA small subunit methyltransferase A.